A 286-amino-acid polypeptide reads, in one-letter code: ATP synthase gamma chain (286 aa).

Belongs to the ATPase gamma chain family. In terms of assembly, F-type ATPases have 2 components, CF(1) - the catalytic core - and CF(0) - the membrane proton channel. CF(1) has five subunits: alpha(3), beta(3), gamma(1), delta(1), epsilon(1). CF(0) has three main subunits: a, b and c.

Its subcellular location is the cell inner membrane. Produces ATP from ADP in the presence of a proton gradient across the membrane. The gamma chain is believed to be important in regulating ATPase activity and the flow of protons through the CF(0) complex. In Fuscovulum blasticum (Rhodobacter blasticus), this protein is ATP synthase gamma chain.